The primary structure comprises 629 residues: MNQVTIQWDAVIALYILFSWCHGGITNINCSGHIWVEPATIFKMGMNISIYCQAAIKNCQPRKLHFYKNGIKERFQITRINKTTARLWYKNFLEPHASMYCTAECPKHFQETLICGKDISSGYPPDIPDEVTCVIYEYSGNMTCTWNAGKLTYIDTKYVVHVKSLETEEEQQYLTSSYINISTDSLQGGKKYLVWVQAANALGMEESKQLQIHLDDIVIPSAAVISRAETINATVPKTIIYWDSQTTIEKVSCEMRYKATTNQTWNVKEFDTNFTYVQQSEFYLEPNIKYVFQVRCQETGKRYWQPWSSLFFHKTPETVPQVTSKAFQHDTWNSGLTVASISTGHLTSDNRGDIGLLLGMIVFAVMLSILSLIGIFNRSFRTGIKRRILLLIPKWLYEDIPNMKNSNVVKMLQENSELMNNNSSEQVLYVDPMITEIKEIFIPEHKPTDYKKENTGPLETRDYPQNSLFDNTTVVYIPDLNTGYKPQISNFLPEGSHLSNNNEITSLTLKPPVDSLDSGNNPRLQKHPNFAFSVSSVNSLSNTIFLGELSLILNQGECSSPDIQNSVEEETTMLLENDSPSETIPEQTLLPDEFVSCLGIVNEELPSINTYFPQNILESHFNRISLLEK.

The signal sequence occupies residues Met-1–Gly-23. Over Gly-24–Gly-355 the chain is Extracellular. A glycan (N-linked (GlcNAc...) asparagine; partial) is linked at Asn-29. N-linked (GlcNAc...) asparagine glycosylation is found at Asn-47, Asn-81, and Asn-141. Fibronectin type-III domains are found at residues Ile-127–Ile-217 and Ile-219–Thr-318. An N-linked (GlcNAc...) (high mannose) asparagine glycan is attached at Asn-180. 2 N-linked (GlcNAc...) asparagine glycosylation sites follow: Asn-232 and Asn-262. Residue Asn-273 is glycosylated (N-linked (GlcNAc...) asparagine; partial). The helical transmembrane segment at Leu-356–Phe-376 threads the bilayer. Over Asn-377 to Lys-629 the chain is Cytoplasmic.

Belongs to the type I cytokine receptor family. Type 2 subfamily. Heterodimer with IL12RB1. In presence of IL23, the heterodimer forms the IL23 receptor. Interacts with JAK2 and in presence of IL23 with STAT3. Post-translationally, phosphorylated in response to IL23. As to expression, expressed by monocytes, Th1, Th0, NK and dendritic cells. Isoform 1 is specifically expressed in NK cells.

It is found in the cell membrane. Its function is as follows. Associates with IL12RB1 to form the interleukin-23 receptor. Binds IL23 and mediates T-cells, NK cells and possibly certain macrophage/myeloid cells stimulation probably through activation of the Jak-Stat signaling cascade. IL23 functions in innate and adaptive immunity and may participate in acute response to infection in peripheral tissues. IL23 may be responsible for autoimmune inflammatory diseases and be important for tumorigenesis. This is Interleukin-23 receptor (IL23R) from Homo sapiens (Human).